A 315-amino-acid polypeptide reads, in one-letter code: Protease HtpX homolog (315 aa).

The helical transmembrane segment at 16-36 threads the bilayer; it reads LFMGIGYLIGGASGALIALVV. His-130 contacts Zn(2+). Residue Glu-131 is part of the active site. Zn(2+) is bound at residue His-134. 2 consecutive transmembrane segments (helical) span residues 145–165 and 172–192; these read ITAT…FFGG and GPGL…AMLV. Glu-201 serves as a coordination point for Zn(2+). The interval 282 to 315 is disordered; it reads GGGGASIGRPAGPSPRGAPRSPWSGQPRARGPWG. Low complexity predominate over residues 288–303; sequence IGRPAGPSPRGAPRSP.

The protein belongs to the peptidase M48B family. Zn(2+) is required as a cofactor.

It localises to the cell inner membrane. This chain is Protease HtpX homolog, found in Rhodopseudomonas palustris (strain BisB5).